Here is a 568-residue protein sequence, read N- to C-terminus: 2-succinyl-5-enolpyruvyl-6-hydroxy-3-cyclohexene-1-carboxylate synthase (568 aa).

The protein belongs to the TPP enzyme family. MenD subfamily. In terms of assembly, homodimer. Requires Mg(2+) as cofactor. The cofactor is Mn(2+). Thiamine diphosphate serves as cofactor.

The catalysed reaction is isochorismate + 2-oxoglutarate + H(+) = 5-enolpyruvoyl-6-hydroxy-2-succinyl-cyclohex-3-ene-1-carboxylate + CO2. It participates in quinol/quinone metabolism; 1,4-dihydroxy-2-naphthoate biosynthesis; 1,4-dihydroxy-2-naphthoate from chorismate: step 2/7. The protein operates within quinol/quinone metabolism; menaquinone biosynthesis. Its function is as follows. Catalyzes the thiamine diphosphate-dependent decarboxylation of 2-oxoglutarate and the subsequent addition of the resulting succinic semialdehyde-thiamine pyrophosphate anion to isochorismate to yield 2-succinyl-5-enolpyruvyl-6-hydroxy-3-cyclohexene-1-carboxylate (SEPHCHC). In Mannheimia succiniciproducens (strain KCTC 0769BP / MBEL55E), this protein is 2-succinyl-5-enolpyruvyl-6-hydroxy-3-cyclohexene-1-carboxylate synthase.